The primary structure comprises 689 residues: Glycine--tRNA ligase beta subunit (689 aa).

The protein belongs to the class-II aminoacyl-tRNA synthetase family. Tetramer of two alpha and two beta subunits.

It is found in the cytoplasm. The catalysed reaction is tRNA(Gly) + glycine + ATP = glycyl-tRNA(Gly) + AMP + diphosphate. This chain is Glycine--tRNA ligase beta subunit, found in Oenococcus oeni (strain ATCC BAA-331 / PSU-1).